Here is a 799-residue protein sequence, read N- to C-terminus: Armadillo repeat-containing protein wrm-1 (799 aa).

A compositionally biased stretch (basic and acidic residues) spans 1–10; it reads MEERGPDIEK. The segment at 1 to 60 is disordered; it reads MEERGPDIEKYGSQPCTPLSFDPMLPSTSRVATPVRPSSTLSARQAPASPFRAQPQNMEP. The segment covering 26–43 has biased composition (polar residues); it reads PSTSRVATPVRPSSTLSA. An ARM repeat occupies 454–496; the sequence is ESIRRVIQVVGSDDATIAERATGVLRNIGQPNKQNKVIMVRNG.

As to quaternary structure, interacts (independently of ARM repeat) with nhr-25. Component of the beta-catenin-lit-1 complex (also called the lit-1/wrm-1 complex or the wrm-1/lit-1 kinase complex) at least composed of lit-1 and wrm-1. Interacts (via N-terminus) with lit-1; the interaction is direct and activates lit-1 kinase activity which leads to the phosphorylation of pop-1. This promotes pop-1 interaction with par-5 and translocation of pop-1 from the nucleus to the cytoplasm.

Its subcellular location is the cytoplasm. The protein localises to the cell cortex. The protein resides in the nucleus. Antagonistic role in the Wnt signaling pathway that operates in embryogenesis. When located at the cortex it has been shown to inhibit Wnt signaling during asymmetric cell division but when relocated to the nucleus it shows positive regulation. Has a role in blastomere signaling during endoderm specification. Component of the beta-catenin-lit-1 complex which promotes phosphorylation, down-regulation and subcellular relocation of pop-1. Within the complex, activates lit-1-dependent kinase activity. Can substitute for bar-1 indicating functional redundancy. Appears to have a role in centrosome positioning. Involved in the development of distal tip cells (DTC) by regulating the asymmetric distribution of cye-1 and cki-1 between the daughters of Z1.a and Z4.p cells. The chain is Armadillo repeat-containing protein wrm-1 from Caenorhabditis briggsae.